A 394-amino-acid polypeptide reads, in one-letter code: Aspergillopepsin-1 (394 aa).

Positions 1 to 20 (MVVFSKTAALVLGLSTAVSA) are cleaved as a signal peptide. The propeptide at 21–69 (APAPTRKGFTINQIARPANKTRTVNLPGLYARSLAKFGGTVPQSVKEAA) is activation peptide. Residues 85–391 (YLTPVTVGKS…NSEGPKLGFA (307 aa)) enclose the Peptidase A1 domain. The active site involves Asp101. 2 O-linked (Man...) serine glycosylation sites follow: Ser129 and Ser304. A disulfide bond links Cys319 and Cys354.

The protein belongs to the peptidase A1 family. As to quaternary structure, monomer.

It localises to the secreted. It carries out the reaction Hydrolysis of proteins with broad specificity. Generally favors hydrophobic residues in P1 and P1', but also accepts Lys in P1, which leads to activation of trypsinogen. Does not clot milk.. In terms of biological role, secreted aspartic endopeptidase that allows assimilation of proteinaceous substrates. The scissile peptide bond is attacked by a nucleophilic water molecule activated by two aspartic residues in the active site. Shows a broad primary substrate specificity. Favors hydrophobic residues at the P1 and P1' positions, but also accepts a lysine residue in the P1 position, leading to the activation of trypsinogen and chymotrypsinogen A. This is Aspergillopepsin-1 (pepA) from Aspergillus phoenicis (Aspergillus saitoi).